We begin with the raw amino-acid sequence, 356 residues long: uncharacterized protein (356 aa).

A helical membrane pass occupies residues 8–28; the sequence is ILGFVLFVLGAAIFLTEVMHS.

It to C.elegans C41C4.1 and C18B2.1.

The protein localises to the membrane. This is an uncharacterized protein from Caenorhabditis elegans.